The sequence spans 216 residues: Uracil phosphoribosyltransferase (216 aa).

Residues R85, R110, and 135-143 (DPMVATGYS) each bind 5-phospho-alpha-D-ribose 1-diphosphate. Uracil contacts are provided by residues I200 and 205-207 (GDA). D206 serves as a coordination point for 5-phospho-alpha-D-ribose 1-diphosphate.

Belongs to the UPRTase family. Mg(2+) is required as a cofactor.

The catalysed reaction is UMP + diphosphate = 5-phospho-alpha-D-ribose 1-diphosphate + uracil. It functions in the pathway pyrimidine metabolism; UMP biosynthesis via salvage pathway; UMP from uracil: step 1/1. Its activity is regulated as follows. Allosterically activated by GTP. Functionally, catalyzes the conversion of uracil and 5-phospho-alpha-D-ribose 1-diphosphate (PRPP) to UMP and diphosphate. The sequence is that of Uracil phosphoribosyltransferase from Burkholderia pseudomallei (strain 668).